The chain runs to 274 residues: Elongation factor Ts (274 aa).

The involved in Mg(2+) ion dislocation from EF-Tu stretch occupies residues 82–85 (TDFV).

Belongs to the EF-Ts family.

Its subcellular location is the cytoplasm. Its function is as follows. Associates with the EF-Tu.GDP complex and induces the exchange of GDP to GTP. It remains bound to the aminoacyl-tRNA.EF-Tu.GTP complex up to the GTP hydrolysis stage on the ribosome. The chain is Elongation factor Ts from Flavobacterium psychrophilum (strain ATCC 49511 / DSM 21280 / CIP 103535 / JIP02/86).